The sequence spans 109 residues: Nucleoid-associated protein PC1_1077 (109 aa).

It belongs to the YbaB/EbfC family. Homodimer.

The protein resides in the cytoplasm. Its subcellular location is the nucleoid. In terms of biological role, binds to DNA and alters its conformation. May be involved in regulation of gene expression, nucleoid organization and DNA protection. This chain is Nucleoid-associated protein PC1_1077, found in Pectobacterium carotovorum subsp. carotovorum (strain PC1).